A 189-amino-acid chain; its full sequence is UPF0301 protein PP_4995 (189 aa).

It belongs to the UPF0301 (AlgH) family.

This is UPF0301 protein PP_4995 from Pseudomonas putida (strain ATCC 47054 / DSM 6125 / CFBP 8728 / NCIMB 11950 / KT2440).